Here is a 71-residue protein sequence, read N- to C-terminus: MNVSIPHSFTMTLKEINRSIIYSTTNSVISALLMYNLLTIISTTYLSVSFRRVMFGFNSPKHTNSKLILTD.

This is an uncharacterized protein from Homo sapiens (Human).